Here is a 143-residue protein sequence, read N- to C-terminus: Nucleoside diphosphate kinase (143 aa).

ATP contacts are provided by lysine 11, phenylalanine 59, arginine 87, threonine 93, arginine 104, and asparagine 114. Residue histidine 117 is the Pros-phosphohistidine intermediate of the active site.

The protein belongs to the NDK family. Homotetramer. Mg(2+) is required as a cofactor.

It localises to the cytoplasm. The enzyme catalyses a 2'-deoxyribonucleoside 5'-diphosphate + ATP = a 2'-deoxyribonucleoside 5'-triphosphate + ADP. It catalyses the reaction a ribonucleoside 5'-diphosphate + ATP = a ribonucleoside 5'-triphosphate + ADP. In terms of biological role, major role in the synthesis of nucleoside triphosphates other than ATP. The ATP gamma phosphate is transferred to the NDP beta phosphate via a ping-pong mechanism, using a phosphorylated active-site intermediate. This chain is Nucleoside diphosphate kinase, found in Thioalkalivibrio sulfidiphilus (strain HL-EbGR7).